Consider the following 300-residue polypeptide: uncharacterized protein (300 aa).

This is an uncharacterized protein from Bradyrhizobium diazoefficiens (strain JCM 10833 / BCRC 13528 / IAM 13628 / NBRC 14792 / USDA 110).